The following is a 319-amino-acid chain: Ankyrin repeat domain-containing protein 1 (319 aa).

The stretch at 55–89 forms a coiled coil; that stretch reads LGEEQRKSEKVREAELKKKKLEQRSKLENLEDLEI. ANK repeat units lie at residues 152 to 181, 185 to 214, 218 to 247, 251 to 280, and 284 to 315; these read YKRTALHRACLEGHLAIVEKLMEAGAQIEF, LESTAIHWACRGGNLDVLKLLLNKGAKISA, LLSTALHVAVRTGHYECAEHLIACEADLNA, EGDTPLHDAVRLNRYKMIRLLMTFGADLNV, and AGKTPMDLVLHWQNGTKAIFDSLKENAYKNSR.

Interacts with TTN/titin. Interacts with YBX1. As to expression, expressed in heart, cardiac muscle.

It localises to the nucleus. May play an important role in endothelial cell activation. May act as a nuclear transcription factor that negatively regulates the expression of cardiac genes. In Rattus norvegicus (Rat), this protein is Ankyrin repeat domain-containing protein 1 (Ankrd1).